A 23-amino-acid chain; its full sequence is Unknown protein NF005 from 2D-PAGE (23 aa).

Residues 1 to 23 (AGKARKQLSKNEDTKLKEQYIXD) form a disordered region. The span at 9–23 (SKNEDTKLKEQYIXD) shows a compositional bias: basic and acidic residues.

The sequence is that of Unknown protein NF005 from 2D-PAGE from Naegleria fowleri (Brain eating amoeba).